Reading from the N-terminus, the 4544-residue chain is Prolow-density lipoprotein receptor-related protein 1 (4544 aa).

A signal peptide spans 1-19 (MLTPPLLLLLPLLSALVAA). The Extracellular portion of the chain corresponds to 20 to 4419 (AIDAPKTCSP…EHVFSQQQPG (4400 aa)). LDL-receptor class A domains are found at residues 25 to 66 (KTCS…ICPQ) and 70 to 110 (QRCQ…HCRE). Intrachain disulfides connect Cys-27–Cys-40, Cys-34–Cys-53, Cys-47–Cys-64, Cys-72–Cys-85, Cys-79–Cys-98, and Cys-92–Cys-108. Positions 111-149 (LQGNCSRLGCQHHCVPTLDGPTCYCNSSFQLQADGKTCK) constitute an EGF-like 1 domain. Residue Asn-114 is glycosylated (N-linked (GlcNAc...) asparagine). 6 disulfides stabilise this stretch: Cys-115–Cys-124, Cys-120–Cys-133, Cys-135–Cys-148, Cys-154–Cys-164, Cys-160–Cys-173, and Cys-175–Cys-188. N-linked (GlcNAc...) asparagine glycosylation is present at Asn-136. The EGF-like 2; calcium-binding domain occupies 150-189 (DFDECSVYGTCSQLCTNTDGSFICGCVEGYLLQPDNRSCK). Residues Asn-185, Asn-239, and Asn-274 are each glycosylated (N-linked (GlcNAc...) asparagine). LDL-receptor class B repeat units lie at residues 292–334 (GNFY…DPAM), 335–378 (GKVF…DLVS), and 379–422 (RLVY…FENY). Asn-357 is a glycosylation site (N-linked (GlcNAc...) asparagine). Asn-446 is a glycosylation site (N-linked (GlcNAc...) asparagine). In terms of domain architecture, EGF-like 3 spans 474–520 (RSHACENDQYGKPGGCSDICLLANSHKARTCRCRSGFSLGSDGKSCK). 3 cysteine pairs are disulfide-bonded: Cys-478/Cys-493, Cys-489/Cys-504, and Cys-506/Cys-519. LDL-receptor class B repeat units follow at residues 571-613 (GFIY…DWMG), 614-659 (DNLY…DPLN), 660-710 (GWMY…DIPA), and 711-754 (GRLY…HGNY). A glycan (N-linked (GlcNAc...) (complex) asparagine) is linked at Asn-729. The EGF-like 4 domain maps to 803–843 (GTNKCRVNNGGCSSLCLATPGSRQCACAEDQVLDADGVTCL). 33 disulfides stabilise this stretch: Cys-807-Cys-818, Cys-814-Cys-827, Cys-829-Cys-842, Cys-854-Cys-866, Cys-861-Cys-879, Cys-873-Cys-890, Cys-895-Cys-907, Cys-902-Cys-920, Cys-914-Cys-931, Cys-936-Cys-948, Cys-943-Cys-961, Cys-955-Cys-971, Cys-976-Cys-989, Cys-984-Cys-1002, Cys-996-Cys-1011, Cys-1015-Cys-1027, Cys-1022-Cys-1040, Cys-1034-Cys-1051, Cys-1062-Cys-1075, Cys-1069-Cys-1088, Cys-1082-Cys-1097, Cys-1104-Cys-1118, Cys-1112-Cys-1131, Cys-1125-Cys-1140, Cys-1145-Cys-1159, Cys-1152-Cys-1172, Cys-1166-Cys-1182, Cys-1185-Cys-1196, Cys-1192-Cys-1206, Cys-1208-Cys-1221, Cys-1227-Cys-1237, Cys-1233-Cys-1246, and Cys-1248-Cys-1261. 8 LDL-receptor class A domains span residues 852–892 (PQCQ…LCHQ), 893–933 (HTCP…TCSA), 934–973 (RTCP…SCAY), 974–1013 (PTCF…GCSH), 1013–1053 (HSCS…NCTN), 1060–1099 (GGCH…SCEG), 1102–1142 (HVCD…NCES), and 1143–1182 (LACR…GELC). Ca(2+)-binding residues include Trp-871, Asp-874, Asp-876, Asp-878, Asp-884, and Glu-885. N-linked (GlcNAc...) asparagine glycosylation is present at Asn-928. Trp-1032, Asp-1035, Asp-1037, Asp-1039, Asp-1045, and Glu-1046 together coordinate Ca(2+). N-linked (GlcNAc...) asparagine glycosylation is present at Asn-1050. The Ca(2+) site is built by Trp-1080, Asp-1083, Asp-1085, Asp-1087, Asp-1093, and Glu-1094. N-linked (GlcNAc...) asparagine glycans are attached at residues Asn-1154 and Asn-1155. EGF-like domains lie at 1183-1222 (DQCS…HTCQ) and 1223-1262 (IQSY…ESCR). N-linked (GlcNAc...) asparagine glycans are attached at residues Asn-1195 and Asn-1218. 5 LDL-receptor class B repeats span residues 1309-1355 (SALY…DWIA), 1356-1398 (GNIY…DPRD), 1399-1445 (GILF…DYLE), 1446-1490 (KRIL…YGGE), and 1491-1531 (VYWT…YHPS). Residue Asn-1511 is glycosylated (N-linked (GlcNAc...) (complex) asparagine). The region spanning 1536-1579 (APNPCEANGGQGPCSHLCLINYNRTVSCACPHLMKLHKDNTTCY) is the EGF-like 7 domain. Disulfide bonds link Cys-1540-Cys-1553, Cys-1549-Cys-1563, and Cys-1565-Cys-1578. N-linked (GlcNAc...) asparagine glycosylation is found at Asn-1558, Asn-1575, Asn-1616, and Asn-1645. LDL-receptor class B repeat units lie at residues 1627-1669 (QRVY…DWVS), 1670-1713 (RNLF…HPLR), 1714-1753 (GKLY…DFPE), and 1754-1798 (SKLY…MGDK). N-linked (GlcNAc...) asparagine glycosylation is found at Asn-1723, Asn-1733, Asn-1763, and Asn-1825. Residues 1846-1887 (GTNPCSVNNGDCSQLCLPTSETTRSCMCTAGYSLRSGQQACE) enclose the EGF-like 8 domain. Intrachain disulfides connect Cys-1850-Cys-1861, Cys-1857-Cys-1871, and Cys-1873-Cys-1886. Asn-1933 carries N-linked (GlcNAc...) asparagine glycosylation. 4 LDL-receptor class B repeats span residues 1934–1976 (DTIY…DWIA), 1977–2019 (GNIY…HPEK), 2020–2063 (GYLF…DYQD), and 2064–2107 (GKLY…FEDF). Asn-1995 is a glycosylation site (N-linked (GlcNAc...) asparagine). The residue at position 2009 (Lys-2009) is an N6-acetyllysine. N-linked (GlcNAc...) asparagine glycosylation is present at Asn-2048. Residues Asn-2117 and Asn-2127 are each glycosylated (N-linked (GlcNAc...) asparagine). Residues 2155-2195 (GTNVCAVANGGCQQLCLYRGRGQRACACAHGMLAEDGASCR) enclose the EGF-like 9 domain. Intrachain disulfides connect Cys-2159–Cys-2170, Cys-2166–Cys-2180, and Cys-2182–Cys-2194. LDL-receptor class B repeat units lie at residues 2253–2294 (NRIF…HRGW), 2295–2343 (DTLY…DECQ), 2344–2388 (NLMF…DHRA), 2389–2431 (EKLY…YGEH), and 2432–2473 (IFWT…VAND). A glycan (N-linked (GlcNAc...) asparagine) is linked at Asn-2472. The 41-residue stretch at 2478–2518 (ELSPCRINNGGCQDLCLLTHQGHVNCSCRGGRILQDDLTCR) folds into the EGF-like 10 domain. 3 cysteine pairs are disulfide-bonded: Cys-2482–Cys-2493, Cys-2489–Cys-2503, and Cys-2505–Cys-2517. An N-linked (GlcNAc...) asparagine glycan is attached at Asn-2502. N-linked (GlcNAc...) asparagine glycosylation occurs at Asn-2521. LDL-receptor class A domains are found at residues 2522 to 2563 (SSCR…YCNS), 2564 to 2602 (RRCK…PCNK), 2603 to 2641 (TACG…NCSA), 2642 to 2690 (TDCS…DCPG), 2694 to 2732 (PRCP…HCNK), 2732 to 2771 (KFCS…HCEG), and 2772 to 2814 (KTCG…GCLY). Disulfide bonds link Cys-2524–Cys-2537, Cys-2532–Cys-2550, Cys-2544–Cys-2561, Cys-2566–Cys-2578, Cys-2573–Cys-2591, and Cys-2585–Cys-2600. An N-linked (GlcNAc...) asparagine glycan is attached at Asn-2539. Residue Asn-2601 is glycosylated (N-linked (GlcNAc...) asparagine). Disulfide bonds link Cys-2605/Cys-2617, Cys-2612/Cys-2630, Cys-2624/Cys-2639, Cys-2644/Cys-2666, Cys-2660/Cys-2679, Cys-2673/Cys-2688, Cys-2696/Cys-2708, Cys-2703/Cys-2721, Cys-2715/Cys-2730, Cys-2734/Cys-2746, Cys-2741/Cys-2759, Cys-2753/Cys-2769, Cys-2774/Cys-2787, Cys-2781/Cys-2800, and Cys-2794/Cys-2812. Asn-2620 and Asn-2638 each carry an N-linked (GlcNAc...) asparagine glycan. A glycan (N-linked (GlcNAc...) asparagine) is linked at Asn-2815. LDL-receptor class A domains follow at residues 2816–2855 (STCD…ECEY), 2856–2899 (PTCG…HCTS), and 2902–2940 (HKCN…RGCH). 15 disulfides stabilise this stretch: Cys-2818–Cys-2830, Cys-2825–Cys-2843, Cys-2837–Cys-2853, Cys-2858–Cys-2870, Cys-2865–Cys-2884, Cys-2878–Cys-2897, Cys-2904–Cys-2917, Cys-2912–Cys-2930, Cys-2924–Cys-2939, Cys-2944–Cys-2956, Cys-2952–Cys-2965, Cys-2967–Cys-2980, Cys-2986–Cys-2996, Cys-2992–Cys-3005, and Cys-3007–Cys-3021. N-linked (GlcNAc...) asparagine glycosylation is present at Asn-2905. The region spanning 2941 to 2981 (INECLSRKLSGCSQDCEDLKIGFKCRCRPGFRLKDDGRTCA) is the EGF-like 11 domain. Positions 2982–3022 (DVDECSTTFPCSQRCINTHGSYKCLCVEGYAPRGGDPHSCK) constitute an EGF-like 12; calcium-binding domain. Residues Asn-3048 and Asn-3089 are each glycosylated (N-linked (GlcNAc...) asparagine). LDL-receptor class B repeat units follow at residues 3069 to 3113 (QMIY…DWVG), 3114 to 3156 (GNLY…DVQN), 3157 to 3200 (GYLY…DYVT), 3201 to 3243 (ERIY…FEDY), and 3244 to 3284 (VYWT…FHAL). A glycan (N-linked (GlcNAc...) asparagine) is linked at Asn-3264. An EGF-like 13 domain is found at 3290 to 3331 (PNHPCKVNNGGCSNLCLLSPGGGHKCACPTNFYLGSDGRTCV). 3 cysteine pairs are disulfide-bonded: Cys-3294–Cys-3305, Cys-3301–Cys-3315, and Cys-3317–Cys-3330. 11 consecutive LDL-receptor class A domains span residues 3332–3371 (SNCT…DCPE), 3372–3410 (FKCR…NCDI), 3411–3450 (HVCL…DCPE), 3451–3491 (VTCA…NCTQ), 3492–3533 (MTCG…ECDE), 3534–3572 (RTCE…SCTP), 3573–3611 (RPCS…DCTP), 3611–3649 (PRCD…ACGT), 3652–3692 (RTCP…ECAR), 3693–3733 (FVCP…DCEP), and 3739–3778 (THCK…DCSI). Asn-3333 is a glycosylation site (N-linked (GlcNAc...) asparagine). Intrachain disulfides connect Cys-3334/Cys-3346, Cys-3341/Cys-3359, Cys-3353/Cys-3369, Cys-3374/Cys-3386, Cys-3381/Cys-3399, Cys-3393/Cys-3408, Cys-3413/Cys-3426, Cys-3420/Cys-3439, Cys-3433/Cys-3448, Cys-3453/Cys-3466, Cys-3460/Cys-3479, Cys-3473/Cys-3489, Cys-3494/Cys-3507, Cys-3501/Cys-3520, Cys-3514/Cys-3531, Cys-3536/Cys-3548, Cys-3543/Cys-3561, Cys-3555/Cys-3570, Cys-3575/Cys-3587, Cys-3582/Cys-3600, Cys-3594/Cys-3609, Cys-3613/Cys-3625, Cys-3620/Cys-3638, Cys-3632/Cys-3647, Cys-3654/Cys-3666, Cys-3661/Cys-3679, Cys-3673/Cys-3690, Cys-3695/Cys-3709, Cys-3703/Cys-3722, Cys-3716/Cys-3731, Cys-3741/Cys-3754, Cys-3749/Cys-3767, Cys-3761/Cys-3776, Cys-3785/Cys-3798, Cys-3792/Cys-3807, Cys-3809/Cys-3822, Cys-3828/Cys-3838, Cys-3834/Cys-3847, and Cys-3849/Cys-3860. A glycan (N-linked (GlcNAc...) asparagine) is linked at Asn-3488. An N-linked (GlcNAc...) asparagine glycan is attached at Asn-3662. 2 EGF-like domains span residues 3781–3823 (KLTS…PGCQ) and 3824–3861 (DINE…NTCK). N-linked (GlcNAc...) asparagine glycosylation occurs at Asn-3788. Asn-3839 is a glycosylation site (N-linked (GlcNAc...) asparagine). LDL-receptor class B repeat units lie at residues 3912–3954 (GRVY…HLNI), 3970–4012 (GNVY…DPLR), 4013–4056 (GTMY…DYHN), and 4057–4101 (ERLY…FEDY). The Recognition site for proteolytical processing signature appears at 3940–3943 (RHRR). N-linked (GlcNAc...) asparagine glycosylation is present at Asn-3953. N-linked (GlcNAc...) asparagine glycosylation is found at Asn-4075 and Asn-4125. 7 EGF-like domains span residues 4147–4183 (VTNP…GTCV), 4196–4232 (RPGT…DKCE), 4232–4268 (ELDQ…PKCT), 4268–4304 (TQQV…DRCQ), 4304–4340 (QYRQ…SRCE), 4340–4375 (EVNK…PSCL), and 4373–4409 (SCLT…PRCE). Intrachain disulfides connect Cys-4151-Cys-4160, Cys-4156-Cys-4169, Cys-4171-Cys-4182, Cys-4200-Cys-4210, Cys-4204-Cys-4220, Cys-4222-Cys-4231, Cys-4236-Cys-4246, Cys-4240-Cys-4256, Cys-4258-Cys-4267, Cys-4272-Cys-4282, Cys-4276-Cys-4292, Cys-4294-Cys-4303, Cys-4308-Cys-4318, Cys-4312-Cys-4328, Cys-4330-Cys-4339, Cys-4344-Cys-4352, and Cys-4347-Cys-4363. Asn-4179 carries an N-linked (GlcNAc...) asparagine glycan. 2 N-linked (GlcNAc...) asparagine glycosylation sites follow: Asn-4278 and Asn-4279. Residue Asn-4364 is glycosylated (N-linked (GlcNAc...) asparagine). Disulfide bonds link Cys-4365/Cys-4374, Cys-4377/Cys-4387, Cys-4381/Cys-4397, and Cys-4399/Cys-4408. Residues 4420–4444 (HIASILIPLLLLLLLVLVAGVVFWY) traverse the membrane as a helical segment. At 4445–4544 (KRRVQGAKGF…PEDEIGDPLA (100 aa)) the chain is on the cytoplasmic side. The segment at 4445–4544 (KRRVQGAKGF…PEDEIGDPLA (100 aa)) is interaction with MAFB. Position 4460 is a phosphothreonine (Thr-4460). The short motif at 4502–4507 (FTNPVY) is the NPXY motif element. Tyr-4507 is modified (phosphotyrosine). Residues Ser-4517, Ser-4520, and Ser-4523 each carry the phosphoserine modification.

This sequence belongs to the LDLR family. In terms of assembly, heterodimer of an 85-kDa membrane-bound carboxyl subunit and a non-covalently attached 515-kDa N-terminal subunit. Intracellular domain interacts with MAFB. Found in a complex with PID1/PCLI1, LRP1 and CUBNI. Interacts with SNX17, PID1/PCLI1, PDGF and CUBN. The intracellular domain interacts with SHC1, GULP1 and DAB1. Can weakly interact (via NPXY motif) with DAB2 (via PID domain); the interaction is enhanced by tyrosine phosphorylation of the NPXY motif. Interacts with MDK; promotes neuronal survival. Interacts with LRPAP1; this interaction is followed by rapid internalization. Interacts with uPA/PLAU and PAI1/SERPINE1, either individually or in complex with each other, leading to rapid endocytosis; this interaction is abolished in the presence of LRPAP1/RAP. Also interacts with tPA/PLAT alone or in complex with SERPINE1. Interacts with the urokinase receptor PLAUR; this interaction leads to PLAUR internalization and is impaired in the presence of SORL1. Interacts with PDGFB. Interacts with TAU/MAPT, leading to endocytosis; this interaction is reduced in the presence of LRPAP1/RAP. Interacts with IGFBP3; this interaction mediates cell growth inhibition independently of IGF1. Interacts with ADGRG6. As to quaternary structure, (Microbial infection) Interacts with bacterial exotoxins. (Microbial infection) Interacts with Rift valley fever virus (RVFV) glycoprotein N; this interaction facilitates virus entry. Post-translationally, cleaved into a 85 kDa membrane-spanning subunit (LRP-85) and a 515 kDa large extracellular domain (LRP-515) that remains non-covalently associated. Gamma-secretase-dependent cleavage of LRP-85 releases the intracellular domain from the membrane. In terms of processing, the N-terminus is blocked. Phosphorylated on serine and threonine residues. Post-translationally, phosphorylated on tyrosine residues upon stimulation with PDGF. Tyrosine phosphorylation promotes interaction with SHC1. Most abundant in liver, brain and lung.

The protein localises to the cell membrane. It is found in the membrane. Its subcellular location is the coated pit. The protein resides in the cytoplasm. It localises to the nucleus. The protein localises to the golgi outpost. It is found in the cytoskeleton. Its subcellular location is the microtubule organizing center. Endocytic receptor involved in endocytosis and in phagocytosis of apoptotic cells. Required for early embryonic development. Involved in cellular lipid homeostasis. Involved in the plasma clearance of chylomicron remnants and activated LRPAP1 (alpha 2-macroglobulin), as well as the local metabolism of complexes between plasminogen activators and their endogenous inhibitors. Acts as an LRPAP1 alpha-2-macroglobulin receptor. Acts as TAU/MAPT receptor and controls the endocytosis of TAU/MAPT as well as its subsequent spread. May modulate cellular events, such as APP metabolism, kinase-dependent intracellular signaling, neuronal calcium signaling as well as neurotransmission. Also acts as a receptor for IGFBP3 to mediate cell growth inhibition. Its function is as follows. (Microbial infection) Functions as a receptor for Pseudomonas aeruginosa exotoxin A. In Homo sapiens (Human), this protein is Prolow-density lipoprotein receptor-related protein 1.